Consider the following 295-residue polypeptide: Methionine aminopeptidase (295 aa).

Histidine 62 contacts substrate. A divalent metal cation contacts are provided by aspartate 82, aspartate 93, and histidine 153. Histidine 161 contributes to the substrate binding site. Residues glutamate 187 and glutamate 280 each coordinate a divalent metal cation.

This sequence belongs to the peptidase M24A family. Methionine aminopeptidase archaeal type 2 subfamily. In terms of assembly, monomer. The cofactor is Co(2+). It depends on Zn(2+) as a cofactor. Requires Mn(2+) as cofactor. Fe(2+) is required as a cofactor.

It carries out the reaction Release of N-terminal amino acids, preferentially methionine, from peptides and arylamides.. In terms of biological role, removes the N-terminal methionine from nascent proteins. The N-terminal methionine is often cleaved when the second residue in the primary sequence is small and uncharged (Met-Ala-, Cys, Gly, Pro, Ser, Thr, or Val). This Pyrococcus horikoshii (strain ATCC 700860 / DSM 12428 / JCM 9974 / NBRC 100139 / OT-3) protein is Methionine aminopeptidase.